Reading from the N-terminus, the 247-residue chain is Nodulation protein H (247 aa).

The tract at residues 1–16 (MTHSTLPPRPFAILAM) is hydrophobic.

Functionally, required for the formation of sulfated nod factor. Proposed to transfer activated sulfate (PAPS) to a N-acetylglucosamine of the nod factor. This is Nodulation protein H (nodH) from Rhizobium meliloti (Ensifer meliloti).